Reading from the N-terminus, the 122-residue chain is Large ribosomal subunit protein uL14 (122 aa).

This sequence belongs to the universal ribosomal protein uL14 family. In terms of assembly, part of the 50S ribosomal subunit. Forms a cluster with proteins L3 and L19. In the 70S ribosome, L14 and L19 interact and together make contacts with the 16S rRNA in bridges B5 and B8.

Binds to 23S rRNA. Forms part of two intersubunit bridges in the 70S ribosome. This is Large ribosomal subunit protein uL14 from Corynebacterium glutamicum (strain R).